A 334-amino-acid chain; its full sequence is MLDDRAKLLLKALVERYIADGQPVGSRTLSQASGIDLSPATIRHVMADLEDLGLIASPHTSAGRRPTARGYRLFVDTMLTVQRDPLTAPELAPEQPQKVIANAAQLLSSLSQFVGVVIAPRRSSVFRHIEFLRLSERRFLVIIVSPEGDVQNRVIFTDIDYSQAQLIEASHFLNSHYTGLAMEQVRERLKSEVDMLRNEIAALMQAAVNVGSEALSDVQDEVVISGERNLLAVSDFSSDMDHLRRAFDLFEQKTQILRLLDISSQAQGVRIYIGGESQVVPFEELSVVSASYEVDGTMVGTLGVIGPTRMPYDRMIQIVDITSRLLSNALSHRK.

It belongs to the HrcA family.

Negative regulator of class I heat shock genes (grpE-dnaK-dnaJ and groELS operons). Prevents heat-shock induction of these operons. This Verminephrobacter eiseniae (strain EF01-2) protein is Heat-inducible transcription repressor HrcA.